Reading from the N-terminus, the 143-residue chain is Large ribosomal subunit protein uL11 (143 aa).

This sequence belongs to the universal ribosomal protein uL11 family. In terms of assembly, part of the ribosomal stalk of the 50S ribosomal subunit. Interacts with L10 and the large rRNA to form the base of the stalk. L10 forms an elongated spine to which L12 dimers bind in a sequential fashion forming a multimeric L10(L12)X complex. In terms of processing, one or more lysine residues are methylated.

In terms of biological role, forms part of the ribosomal stalk which helps the ribosome interact with GTP-bound translation factors. The protein is Large ribosomal subunit protein uL11 of Paenarthrobacter aurescens (strain TC1).